A 407-amino-acid chain; its full sequence is Expansin-like protein 2 (407 aa).

The first 23 residues, 1–23 (MKMKNFLSKSLLVLLIGLIGVKS), serve as a signal peptide directing secretion. Positions 42 to 141 (HGNCGYEQLT…KKVSCDVTGN (100 aa)) constitute an Expansin-like EG45 domain. 2 cysteine pairs are disulfide-bonded: cysteine 45–cysteine 75 and cysteine 78–cysteine 136. Asparagine 70, asparagine 117, and asparagine 387 each carry an N-linked (GlcNAc...) asparagine glycan.

Belongs to the expansin family. Expansin A subfamily.

The protein localises to the secreted. Functionally, unlikely to encode with a protein with expansin activity. The protein is Expansin-like protein 2 (expl2) of Dictyostelium discoideum (Social amoeba).